Consider the following 234-residue polypeptide: Glucosamine-6-phosphate deaminase (234 aa).

The Proton acceptor; for enolization step role is filled by Asp62. Asn128 functions as the For ring-opening step in the catalytic mechanism. His130 serves as the catalytic Proton acceptor; for ring-opening step. The active-site For ring-opening step is the Glu135.

It belongs to the glucosamine/galactosamine-6-phosphate isomerase family. NagB subfamily.

It carries out the reaction alpha-D-glucosamine 6-phosphate + H2O = beta-D-fructose 6-phosphate + NH4(+). Its pathway is amino-sugar metabolism; N-acetylneuraminate degradation; D-fructose 6-phosphate from N-acetylneuraminate: step 5/5. Its function is as follows. Catalyzes the reversible isomerization-deamination of glucosamine 6-phosphate (GlcN6P) to form fructose 6-phosphate (Fru6P) and ammonium ion. The chain is Glucosamine-6-phosphate deaminase from Streptococcus pyogenes serotype M18 (strain MGAS8232).